The primary structure comprises 55 residues: MEDSSLSSGVDVDKGFAIAFVVLLFLFLIVMIFRCAKLVKNPYKASSTTTEPSLS.

A helical transmembrane segment spans residues 16–36; it reads FAIAFVVLLFLFLIVMIFRCA.

The protein resides in the membrane. The protein is Cortexin domain containing 2 of Homo sapiens (Human).